Consider the following 729-residue polypeptide: U-box domain-containing protein 17 (729 aa).

The U-box domain occupies 304–378; that stretch reads TVPKDFVCPI…VQWCTASGIS (75 aa). ARM repeat units lie at residues 438–477, 479–520, 523–562, and 564–601; these read KENRAYIAEAGAIPHLCRLLTSENAIAQENSVTAMLNLSI, EKNK…SLSA, EYKKRIAIVDQCVEALALLLQNGTPRGKKDAVTALYNLST, and PDNCSRMIEGGGVSSLVGALKNEGVAEEAAGALALLVR.

It carries out the reaction S-ubiquitinyl-[E2 ubiquitin-conjugating enzyme]-L-cysteine + [acceptor protein]-L-lysine = [E2 ubiquitin-conjugating enzyme]-L-cysteine + N(6)-ubiquitinyl-[acceptor protein]-L-lysine.. It participates in protein modification; protein ubiquitination. Functionally, functions as an E3 ubiquitin ligase. This is U-box domain-containing protein 17 (PUB17) from Arabidopsis thaliana (Mouse-ear cress).